Reading from the N-terminus, the 165-residue chain is Large ribosomal subunit protein uL10 (165 aa).

This sequence belongs to the universal ribosomal protein uL10 family. As to quaternary structure, part of the ribosomal stalk of the 50S ribosomal subunit. The N-terminus interacts with L11 and the large rRNA to form the base of the stalk. The C-terminus forms an elongated spine to which L12 dimers bind in a sequential fashion forming a multimeric L10(L12)X complex.

Functionally, forms part of the ribosomal stalk, playing a central role in the interaction of the ribosome with GTP-bound translation factors. This chain is Large ribosomal subunit protein uL10, found in Buchnera aphidicola subsp. Schizaphis graminum (strain Sg).